Reading from the N-terminus, the 290-residue chain is Putative speedy protein-like protein 3 (290 aa).

Residues 16–50 (GVDPSPPCRSLGWKRKKEWSDESEEEPEKELAPEP) form a disordered region. A compositionally biased stretch (acidic residues) spans 36-50 (DESEEEPEKELAPEP).

The protein belongs to the Speedy/Ringo family.

The chain is Putative speedy protein-like protein 3 from Homo sapiens (Human).